Consider the following 247-residue polypeptide: ATP synthase subunit a, chloroplastic (247 aa).

5 helical membrane passes run 38–58 (QVLITSWVVITILLGSVIIAV), 95–115 (VPFIGTMFLFIFVSNWSGALL), 134–154 (INTTVALALLTSAAYFYAGLS), 199–219 (LVVVVLVSLVPLVVPIPVMFL), and 220–240 (GLFTSGIQALIFATLAAAYIG).

Belongs to the ATPase A chain family. F-type ATPases have 2 components, CF(1) - the catalytic core - and CF(0) - the membrane proton channel. CF(1) has five subunits: alpha(3), beta(3), gamma(1), delta(1), epsilon(1). CF(0) has four main subunits: a, b, b' and c.

It localises to the plastid. It is found in the chloroplast thylakoid membrane. Key component of the proton channel; it plays a direct role in the translocation of protons across the membrane. The protein is ATP synthase subunit a, chloroplastic of Oryza nivara (Indian wild rice).